A 975-amino-acid polypeptide reads, in one-letter code: Synaptopodin 2-like protein (975 aa).

Positions 6–85 (EVQVTLAGGA…QLVLTVRRVT (80 aa)) constitute a PDZ domain. Disordered regions lie at residues 18 to 41 (GFRL…QAGR), 86 to 214 (DEGS…PAEA), and 314 to 349 (AGTG…QSDW). A phosphoserine mark is found at S105 and S108. The residue at position 138 (T138) is a Phosphothreonine. Phosphoserine occurs at positions 140, 163, 175, and 177. Positions 187–200 (GSPSQGDSRVSSPS) are enriched in polar residues. Low complexity predominate over residues 202–214 (EEGAALQPPPAEA). A compositionally biased stretch (polar residues) spans 339–349 (DARSLTNQSDW). 5 positions are modified to phosphoserine: S342, S347, S371, S378, and S381. 4 positions are modified to omega-N-methylarginine: R383, R463, R466, and R476. Residues 491-649 (KVNEGLGSTS…ETKNSPNPEL (159 aa)) are disordered. Residues 502 to 516 (APSPFAAPPQGPTPL) show a composition bias toward pro residues. Positions 519–528 (FTTVVPSHTP) are enriched in polar residues. Low complexity-rich tracts occupy residues 530-540 (SGASSSTQRSS) and 571-580 (SAAAMTSTAS). Residues S667 and S675 each carry the phosphoserine modification. Positions 687–731 (LGGRSYKTLPQVSPKTPPPMAPKTPPPTTPKTPPPVAPKPGSRGL) are disordered. Residues 701 to 724 (KTPPPMAPKTPPPTTPKTPPPVAP) are compositionally biased toward pro residues. Phosphothreonine occurs at positions 702 and 710. R754 is subject to Omega-N-methylarginine. Residues 772–797 (EATSGSSLNPGLRPRSPSPTPSLPPS) are disordered. 2 positions are modified to phosphoserine: S787 and S789. T791 bears the Phosphothreonine mark. R805, R825, and R888 each carry omega-N-methylarginine. The residue at position 890 (S890) is a Phosphoserine. Phosphothreonine occurs at positions 891 and 897. At R909 the chain carries Omega-N-methylarginine. An Asymmetric dimethylarginine; alternate modification is found at R920. An Omega-N-methylarginine; alternate modification is found at R920. Omega-N-methylarginine occurs at positions 953 and 955.

Belongs to the synaptopodin family.

The protein localises to the cytoplasm. Its subcellular location is the cytoskeleton. Its function is as follows. Actin-associated protein that may play a role in modulating actin-based shape. This chain is Synaptopodin 2-like protein (Synpo2l), found in Mus musculus (Mouse).